The chain runs to 208 residues: Small ribosomal subunit protein uS4 (208 aa).

Positions 98–163 (TRLDNVVFRL…TPLFKEIVDG (66 aa)) constitute an S4 RNA-binding domain.

The protein belongs to the universal ribosomal protein uS4 family. In terms of assembly, part of the 30S ribosomal subunit. Contacts protein S5. The interaction surface between S4 and S5 is involved in control of translational fidelity.

One of the primary rRNA binding proteins, it binds directly to 16S rRNA where it nucleates assembly of the body of the 30S subunit. Its function is as follows. With S5 and S12 plays an important role in translational accuracy. The sequence is that of Small ribosomal subunit protein uS4 from Heliobacterium modesticaldum (strain ATCC 51547 / Ice1).